The primary structure comprises 962 residues: Thrombospondin-3a (962 aa).

The N-terminal stretch at 1 to 23 is a signal peptide; sequence MEQMFVHIWVSLVVLMSVWSAQS. The 173-residue stretch at 24–196 folds into the Laminin G-like domain; it reads DKKQDVPVID…MDTLKLALGG (173 aa). Residues 277–318 form the EGF-like 1 domain; that stretch reads PRSRCQPNPCFKGVSCMETFEYPGYRCGPCPDGMTGNGTHCQ. 20 cysteine pairs are disulfide-bonded: cysteine 281/cysteine 292, cysteine 286/cysteine 303, cysteine 306/cysteine 317, cysteine 323/cysteine 335, cysteine 329/cysteine 344, cysteine 347/cysteine 371, cysteine 377/cysteine 390, cysteine 384/cysteine 399, cysteine 402/cysteine 414, cysteine 420/cysteine 434, cysteine 428/cysteine 444, cysteine 446/cysteine 457, cysteine 473/cysteine 480, cysteine 485/cysteine 505, cysteine 521/cysteine 541, cysteine 544/cysteine 564, cysteine 580/cysteine 600, cysteine 603/cysteine 623, cysteine 641/cysteine 661, and cysteine 684/cysteine 704. A glycan (N-linked (GlcNAc...) asparagine) is linked at asparagine 313. The region spanning 319–358 is the EGF-like 2; calcium-binding domain; the sequence is DIDECSEAQPCYTPGACVNTARGFTCESCPPGMWGPPLSG. Positions 373–412 constitute an EGF-like 3; calcium-binding domain; the sequence is DIDECVDLANACTPNSVCINIIGSFRCGQCKTGYVGNQTA. A glycan (N-linked (GlcNAc...) asparagine) is linked at asparagine 409. The EGF-like 4 domain occupies 416 to 458; sequence PRKSCSSLSFNPCDANAHCVMQRNGDVSCACNVGWAGNGHTCG. TSP type-3 repeat units follow at residues 459-493, 494-529, 530-552, 553-588, 589-611, 612-649, 650-692, and 693-728; these read KDTD…NSGQ, EDAD…NKDQ, QNSD…NIDQ, KDTD…NPMQ, TDRD…NPMQ, TDVD…NSSQ, LDSD…NPNQ, and KDSD…EVTL. Positions 548 to 704 are disordered; that stretch reads PNIDQKDTDS…SDSNGVGDVC (157 aa). Acidic residues predominate over residues 557 to 570; it reads SNGEGDACDDDIDG. Over residues 631–641 the composition is skewed to basic and acidic residues; it reads GDGHQDTRDNC. Asparagine 646 carries N-linked (GlcNAc...) asparagine glycosylation. Positions 652 to 669 are enriched in acidic residues; sequence SDNDGIGDDCDEDDDNDG. N-linked (GlcNAc...) asparagine glycosylation is present at asparagine 710. A disulfide bond links cysteine 720 and cysteine 941. Positions 732–946 constitute a TSP C-terminal domain; it reads RAYQTVILDP…LRYRCNDTVP (215 aa). Residue asparagine 942 is glycosylated (N-linked (GlcNAc...) asparagine).

It belongs to the thrombospondin family. As to quaternary structure, oligomer; disulfide-linked.

Functionally, adhesive glycoprotein that mediates cell-to-cell and cell-to-matrix interactions. Can bind to fibrinogen, fibronectin, laminin and type V collagen. The chain is Thrombospondin-3a (thbs3a) from Danio rerio (Zebrafish).